A 638-amino-acid chain; its full sequence is 1-deoxy-D-xylulose-5-phosphate synthase (638 aa).

Thiamine diphosphate-binding positions include H79 and 120 to 122 (AHS). D151 contacts Mg(2+). Thiamine diphosphate contacts are provided by residues 152 to 153 (GA), N180, Y289, and E371. N180 is a Mg(2+) binding site.

This sequence belongs to the transketolase family. DXPS subfamily. In terms of assembly, homodimer. It depends on Mg(2+) as a cofactor. The cofactor is thiamine diphosphate.

The enzyme catalyses D-glyceraldehyde 3-phosphate + pyruvate + H(+) = 1-deoxy-D-xylulose 5-phosphate + CO2. Its pathway is metabolic intermediate biosynthesis; 1-deoxy-D-xylulose 5-phosphate biosynthesis; 1-deoxy-D-xylulose 5-phosphate from D-glyceraldehyde 3-phosphate and pyruvate: step 1/1. Catalyzes the acyloin condensation reaction between C atoms 2 and 3 of pyruvate and glyceraldehyde 3-phosphate to yield 1-deoxy-D-xylulose-5-phosphate (DXP). The chain is 1-deoxy-D-xylulose-5-phosphate synthase from Rhizobium etli (strain ATCC 51251 / DSM 11541 / JCM 21823 / NBRC 15573 / CFN 42).